The following is a 294-amino-acid chain: 4-hydroxy-tetrahydrodipicolinate synthase (294 aa).

Thr45 contributes to the pyruvate binding site. Tyr133 functions as the Proton donor/acceptor in the catalytic mechanism. Lys161 serves as the catalytic Schiff-base intermediate with substrate. Pyruvate is bound at residue Ile203.

Belongs to the DapA family. As to quaternary structure, homotetramer; dimer of dimers.

It is found in the cytoplasm. It catalyses the reaction L-aspartate 4-semialdehyde + pyruvate = (2S,4S)-4-hydroxy-2,3,4,5-tetrahydrodipicolinate + H2O + H(+). Its pathway is amino-acid biosynthesis; L-lysine biosynthesis via DAP pathway; (S)-tetrahydrodipicolinate from L-aspartate: step 3/4. Catalyzes the condensation of (S)-aspartate-beta-semialdehyde [(S)-ASA] and pyruvate to 4-hydroxy-tetrahydrodipicolinate (HTPA). This chain is 4-hydroxy-tetrahydrodipicolinate synthase, found in Buchnera aphidicola subsp. Acyrthosiphon pisum (strain 5A).